Reading from the N-terminus, the 126-residue chain is Glycine cleavage system H protein (126 aa).

Residues Val22–Glu104 form the Lipoyl-binding domain. At Lys63 the chain carries N6-lipoyllysine.

Belongs to the GcvH family. In terms of assembly, the glycine cleavage system is composed of four proteins: P, T, L and H. (R)-lipoate serves as cofactor.

Its function is as follows. The glycine cleavage system catalyzes the degradation of glycine. The H protein shuttles the methylamine group of glycine from the P protein to the T protein. Functionally, is also involved in protein lipoylation via its role as an octanoyl/lipoyl carrier protein intermediate. This is Glycine cleavage system H protein from Staphylococcus epidermidis (strain ATCC 35984 / DSM 28319 / BCRC 17069 / CCUG 31568 / BM 3577 / RP62A).